Here is an 86-residue protein sequence, read N- to C-terminus: UPF0367 protein PMN2A_1492 (86 aa).

The protein belongs to the UPF0367 family.

This chain is UPF0367 protein PMN2A_1492, found in Prochlorococcus marinus (strain NATL2A).